Consider the following 198-residue polypeptide: Na(+)-translocating NADH-quinone reductase subunit E (198 aa).

Transmembrane regions (helical) follow at residues 11–31, 39–59, 77–97, 109–129, 140–160, and 176–196; these read AVFI…FLAV, FGLG…NNLV, FLNF…LEMI, LGIF…VSFM, IVYG…LASI, and LGVT…FSGV.

It belongs to the NqrDE/RnfAE family. Composed of six subunits; NqrA, NqrB, NqrC, NqrD, NqrE and NqrF.

It is found in the cell inner membrane. The enzyme catalyses a ubiquinone + n Na(+)(in) + NADH + H(+) = a ubiquinol + n Na(+)(out) + NAD(+). Functionally, NQR complex catalyzes the reduction of ubiquinone-1 to ubiquinol by two successive reactions, coupled with the transport of Na(+) ions from the cytoplasm to the periplasm. NqrA to NqrE are probably involved in the second step, the conversion of ubisemiquinone to ubiquinol. The protein is Na(+)-translocating NADH-quinone reductase subunit E of Proteus mirabilis (strain HI4320).